The chain runs to 346 residues: Ketol-acid reductoisomerase (NADP(+)) (346 aa).

The KARI N-terminal Rossmann domain occupies M1–T189. NADP(+) is bound by residues Y24–Q27, R48, S51, T53, and D83–Q86. Residue H108 is part of the active site. Position 134 (G134) interacts with NADP(+). A KARI C-terminal knotted domain is found at T190–I335. Positions 198, 202, 234, and 238 each coordinate Mg(2+). S259 is a binding site for substrate.

This sequence belongs to the ketol-acid reductoisomerase family. Mg(2+) is required as a cofactor.

The catalysed reaction is (2R)-2,3-dihydroxy-3-methylbutanoate + NADP(+) = (2S)-2-acetolactate + NADPH + H(+). The enzyme catalyses (2R,3R)-2,3-dihydroxy-3-methylpentanoate + NADP(+) = (S)-2-ethyl-2-hydroxy-3-oxobutanoate + NADPH + H(+). Its pathway is amino-acid biosynthesis; L-isoleucine biosynthesis; L-isoleucine from 2-oxobutanoate: step 2/4. The protein operates within amino-acid biosynthesis; L-valine biosynthesis; L-valine from pyruvate: step 2/4. In terms of biological role, involved in the biosynthesis of branched-chain amino acids (BCAA). Catalyzes an alkyl-migration followed by a ketol-acid reduction of (S)-2-acetolactate (S2AL) to yield (R)-2,3-dihydroxy-isovalerate. In the isomerase reaction, S2AL is rearranged via a Mg-dependent methyl migration to produce 3-hydroxy-3-methyl-2-ketobutyrate (HMKB). In the reductase reaction, this 2-ketoacid undergoes a metal-dependent reduction by NADPH to yield (R)-2,3-dihydroxy-isovalerate. The chain is Ketol-acid reductoisomerase (NADP(+)) from Sphingopyxis alaskensis (strain DSM 13593 / LMG 18877 / RB2256) (Sphingomonas alaskensis).